Consider the following 201-residue polypeptide: MVNSCCGSVCSDQGCGLENCCRPSCCQTTCCRTTCCRPSCCVSSCCRPQCCQSVCCQPTCCRPSCCQTTCCRTTCCRPSCCVSSCCRPQCCQSVCCQPTCCRPSCCQTTCCRTTCCRPSCCVSSCCRPQCCQSVCCQPTCCRPSCCISSSCCPSCCESSCCRPCCCLRPVCGRVSCHTTCYRPTCVISTCPRPLCCASSCC.

A run of 30 repeats spans residues 5 to 9, 20 to 24, 25 to 29, 30 to 34, 35 to 39, 40 to 44, 45 to 49, 50 to 54, 55 to 59, 60 to 64, 65 to 69, 70 to 74, 75 to 79, 80 to 84, 85 to 89, 90 to 94, 95 to 99, 100 to 104, 105 to 109, 110 to 114, 115 to 119, 120 to 124, 125 to 129, 130 to 134, 135 to 139, 140 to 144, 145 to 149, 155 to 159, 160 to 164, and 165 to 169. Residues 5-169 form a 31 X 5 AA repeats of C-C-[GRQVIL]-[SPTR]-[VSTQPC] region; the sequence is CCGSVCSDQG…CCRPCCCLRP (165 aa).

The protein belongs to the KRTAP type 4 family. In terms of assembly, interacts with hair keratins. In terms of tissue distribution, expressed in the hair follicles.

Its function is as follows. In the hair cortex, hair keratin intermediate filaments are embedded in an interfilamentous matrix, consisting of hair keratin-associated proteins (KRTAP), which are essential for the formation of a rigid and resistant hair shaft through their extensive disulfide bond cross-linking with abundant cysteine residues of hair keratins. The matrix proteins include the high-sulfur and high-glycine-tyrosine keratins. This Homo sapiens (Human) protein is Keratin-associated protein 4-12 (KRTAP4-12).